A 143-amino-acid chain; its full sequence is Large ribosomal subunit protein uL11 (143 aa).

The protein belongs to the universal ribosomal protein uL11 family. Part of the ribosomal stalk of the 50S ribosomal subunit. Interacts with L10 and the large rRNA to form the base of the stalk. L10 forms an elongated spine to which L12 dimers bind in a sequential fashion forming a multimeric L10(L12)X complex. In terms of processing, one or more lysine residues are methylated.

Functionally, forms part of the ribosomal stalk which helps the ribosome interact with GTP-bound translation factors. The protein is Large ribosomal subunit protein uL11 of Teredinibacter turnerae (strain ATCC 39867 / T7901).